The sequence spans 244 residues: Large ribosomal subunit protein uL2 (244 aa).

Over residues 1-12 (MGKRILVQRRGR) the composition is skewed to basic residues. 2 disordered regions span residues 1-26 (MGKR…KRDG) and 193-225 (AMSP…KVGF).

This sequence belongs to the universal ribosomal protein uL2 family. In terms of assembly, part of the 50S ribosomal subunit. Forms a bridge to the 30S subunit in the 70S ribosome.

Its function is as follows. One of the primary rRNA binding proteins. Required for association of the 30S and 50S subunits to form the 70S ribosome, for tRNA binding and peptide bond formation. It has been suggested to have peptidyltransferase activity; this is somewhat controversial. Makes several contacts with the 16S rRNA in the 70S ribosome. The chain is Large ribosomal subunit protein uL2 from Pyrobaculum calidifontis (strain DSM 21063 / JCM 11548 / VA1).